A 445-amino-acid chain; its full sequence is Exodeoxyribonuclease 7 large subunit (445 aa).

This sequence belongs to the XseA family. As to quaternary structure, heterooligomer composed of large and small subunits.

It is found in the cytoplasm. The enzyme catalyses Exonucleolytic cleavage in either 5'- to 3'- or 3'- to 5'-direction to yield nucleoside 5'-phosphates.. Bidirectionally degrades single-stranded DNA into large acid-insoluble oligonucleotides, which are then degraded further into small acid-soluble oligonucleotides. The chain is Exodeoxyribonuclease 7 large subunit from Pasteurella multocida (strain Pm70).